The following is a 448-amino-acid chain: MSYSVLEALRNNPDYVKKVLTARRLDTSLVDKFLELDKKWRQLKKEVDELRHVYNQLSKEGAKAPPERRREIVEKARELAAKLENLEKEVEKIEREREDLLWSFPNLIHDSVPICPEGVDSIPVRYGGVVKVAKDAVGTLKDVEYVIVDKLPIGHADMAEVVLGMVDTLKAGEVAGSRFYYLLDDLVWLDFALAMYAMDRLAQKGFRPIIPPYMLKFDVIKRVLDFDTFRDAIYKIEGEDLYLIATAEHGIAAYLYKRELVEDELPLLFVGWSPCFRKEAGAGSRDLKGIFRVHIFHKVEQFVFSLPEDSWRWHEEITKNTEELIKDLGLPYRVVNICAHDLGAPAAKKYDIEVWYPAQSMYRELASCSNVTDWQSYRLGIRVTRKGMRREFVHTLNCTGLATTRTITAILENFQREDGVVEIPKVLRPYLEPIKAAPKDYIYPKKRS.

L-serine is bound at residue 246 to 248 (TAE). ATP-binding positions include 277–279 (RKE) and Val-293. L-serine is bound at residue Glu-300. 364–367 (ELAS) contacts ATP. Position 399 (Thr-399) interacts with L-serine.

Belongs to the class-II aminoacyl-tRNA synthetase family. Type-1 seryl-tRNA synthetase subfamily. Homodimer. The tRNA molecule binds across the dimer.

Its subcellular location is the cytoplasm. It carries out the reaction tRNA(Ser) + L-serine + ATP = L-seryl-tRNA(Ser) + AMP + diphosphate + H(+). It catalyses the reaction tRNA(Sec) + L-serine + ATP = L-seryl-tRNA(Sec) + AMP + diphosphate + H(+). The protein operates within aminoacyl-tRNA biosynthesis; selenocysteinyl-tRNA(Sec) biosynthesis; L-seryl-tRNA(Sec) from L-serine and tRNA(Sec): step 1/1. Its function is as follows. Catalyzes the attachment of serine to tRNA(Ser). Is also able to aminoacylate tRNA(Sec) with serine, to form the misacylated tRNA L-seryl-tRNA(Sec), which will be further converted into selenocysteinyl-tRNA(Sec). This chain is Serine--tRNA ligase, found in Pyrobaculum islandicum (strain DSM 4184 / JCM 9189 / GEO3).